A 574-amino-acid chain; its full sequence is Acetolactate synthase isozyme 3 large subunit (574 aa).

Glu51 is a binding site for thiamine diphosphate. FAD contacts are provided by residues Arg153, His261–Arg282, and Asp304–Asp323. The interval Gln397–Tyr477 is thiamine pyrophosphate binding. 2 residues coordinate Mg(2+): Asp448 and Asn475.

It belongs to the TPP enzyme family. In terms of assembly, dimer of large and small chains. The cofactor is Mg(2+). Requires thiamine diphosphate as cofactor.

The catalysed reaction is 2 pyruvate + H(+) = (2S)-2-acetolactate + CO2. Its pathway is amino-acid biosynthesis; L-isoleucine biosynthesis; L-isoleucine from 2-oxobutanoate: step 1/4. It participates in amino-acid biosynthesis; L-valine biosynthesis; L-valine from pyruvate: step 1/4. Its activity is regulated as follows. Sensitive to valine inhibition. The protein is Acetolactate synthase isozyme 3 large subunit (ilvI) of Escherichia coli (strain K12).